Reading from the N-terminus, the 273-residue chain is Glutamate 5-kinase (273 aa).

Lys15 provides a ligand contact to ATP. Positions 55, 142, and 158 each coordinate substrate. Residues 178–179 and 220–226 contribute to the ATP site; these read SD and TGGMLSK.

Belongs to the glutamate 5-kinase family.

The protein localises to the cytoplasm. It carries out the reaction L-glutamate + ATP = L-glutamyl 5-phosphate + ADP. The protein operates within amino-acid biosynthesis; L-proline biosynthesis; L-glutamate 5-semialdehyde from L-glutamate: step 1/2. In terms of biological role, catalyzes the transfer of a phosphate group to glutamate to form L-glutamate 5-phosphate. This is Glutamate 5-kinase from Streptococcus pyogenes serotype M4 (strain MGAS10750).